The chain runs to 467 residues: Chromosomal replication initiator protein DnaA (467 aa).

The interval 1 to 79 (MTELDQFWPA…GELPVELRLG (79 aa)) is domain I, interacts with DnaA modulators. The domain II stretch occupies residues 79–129 (GAPTARPAAPVAGNSQPKAKEPAKAAASAPAAPSPAKQAAVKAIGGSHEST). Positions 84-126 (RPAAPVAGNSQPKAKEPAKAAASAPAAPSPAKQAAVKAIGGSH) are disordered. Positions 102-121 (KAAASAPAAPSPAKQAAVKA) are enriched in low complexity. The segment at 130-347 (RLNPSFTFDT…GALKRVVAYA (218 aa)) is domain III, AAA+ region. ATP-binding residues include glycine 175, glycine 177, lysine 178, and threonine 179. Positions 348 to 467 (RFTSQNITLE…YEALLSMLRN (120 aa)) are domain IV, binds dsDNA.

The protein belongs to the DnaA family. Oligomerizes as a right-handed, spiral filament on DNA at oriC.

The protein localises to the cytoplasm. Functionally, plays an essential role in the initiation and regulation of chromosomal replication. ATP-DnaA binds to the origin of replication (oriC) to initiate formation of the DNA replication initiation complex once per cell cycle. Binds the DnaA box (a 9 base pair repeat at the origin) and separates the double-stranded (ds)DNA. Forms a right-handed helical filament on oriC DNA; dsDNA binds to the exterior of the filament while single-stranded (ss)DNA is stabiized in the filament's interior. The ATP-DnaA-oriC complex binds and stabilizes one strand of the AT-rich DNA unwinding element (DUE), permitting loading of DNA polymerase. After initiation quickly degrades to an ADP-DnaA complex that is not apt for DNA replication. Binds acidic phospholipids. This chain is Chromosomal replication initiator protein DnaA, found in Chromobacterium violaceum (strain ATCC 12472 / DSM 30191 / JCM 1249 / CCUG 213 / NBRC 12614 / NCIMB 9131 / NCTC 9757 / MK).